The following is a 144-amino-acid chain: Ribosomally synthesized cyclic peptide phomopsin precursor phomA' (144 aa).

The signal sequence occupies residues 1 to 18 (MRFTPAIVIAAFCSLAVA). 9 propeptides span residues 19 to 35 (APAA…AVED), 42 to 50 (KKRGEAVED), 57 to 65 (KKRGEAVED), 72 to 79 (KRGEAVED), 86 to 94 (KKRGEAVED), 101 to 108 (KRGEAVED), 115 to 123 (KKRGEAVED), 130 to 137 (KRGEAVED), and Lys144.

In terms of processing, phomA' is processed by several endopeptidases including kexin proteases as well as the cluster-specific S41 family peptidase phomP1' and the peptidase phomG' to produce 5 identical copies of the hexapeptide Tyr-Val-Ile-Pro-Ile-Asp and 3 identical copies of Tyr-Val-Ile-Pro-Phe-Asp, that are further modified into phomapsins A and P, respectively. The timing and order of proteolysis of the phomA' precursor and PTMs are still unknown. Two tyrosinase-like enzyme phomQ1' and PhomQ2, catalyze the chlorination and hydroxylation of Tyr, respectively. PhomYb', is proposed to be involved in the construction of the macrocyclic structure. The other four ustYa family proteins may be involved in PTMs that generate the unique structure of phomopsin A. PhomYa' is required for the hydroxylation of C-beta of Tyr. PhomYc', PhomYd', and PhomYe' are responsible for the biosynthesis of 2,3-dehydroisoleucine (dIle), 2,3-dehydroaspartic acid (dAsp), and 3,4-dehydroproline (dPro), respectively. While dIle formation by phomYc is indispensable for the installation of dAsp by phomYd, the order of the other PTMs have not been elucidated yet. Most of the biosynthetic enzymes likely have broad substrate specificity, and thus, there might be a metabolic grid from a precursor to phomopsin A. The enzyme(s) responsible for the biosynthesis of 3,4-dehydrovaline (dVal) have also not been identified yet. Finally, PhomM' acts as an S-adenosylmethionine-dependent alpha-N-methyltransferase that catalyzes two successive N-methylation reactions, converting N-desmethyl-phomopsin A to phomopsin A and phomopsin A further to an N,N-dimethylated congener called phomopsin E.

It participates in mycotoxin biosynthesis. Ribosomally synthesized cyclic peptide phomopsin precursor; part of the gene cluster that mediates the biosynthesis of the phomopsins, a group of hexapeptide mycotoxins which infects lupins and causes lupinosis disease in livestock. The phomA' translated product contains a 5-fold repeated peptide embedding the hexapeptide Tyr-Val-Ile-Pro-Ile-Asp and a 3-fold repeated peptide embedding the hexapeptide Tyr-Val-Ile-Pro-Phe-Asp, that is converted into phomapsin A and phomapsin P, respectively. After being excised from the precursor peptide by kexin proteases, the core peptides are cyclized and modified post-translationally by enzymes encoded within the corresponding gene cluster. The chain is Ribosomally synthesized cyclic peptide phomopsin precursor phomA' from Diaporthe leptostromiformis (Lupinosis disease fungus).